A 606-amino-acid polypeptide reads, in one-letter code: Lysosomal cobalamin transporter ABCD4 (606 aa).

Residues 39–332 (NVLMFMTLLC…CFTQLIDLST (294 aa)) enclose the ABC transmembrane type-1 domain. 5 helical membrane-spanning segments follow: residues 43–63 (FMTLLCVTLLEQLVIYQVGLI), 76–96 (LDGFKALTLLAVTLIVLNSTL), 190–210 (IFGYFIVGTMVNKTLMGPIVT), 279–299 (YLGSILSYVVIAIPIFSGVYG), and 314–334 (AFVCIYLISCFTQLIDLSTTL). An ABC transporter domain is found at 389–603 (LDRVSILAPS…GGGSWELTRI (215 aa)). Position 421 to 428 (421 to 428 (GNTGTGKT)) interacts with ATP.

This sequence belongs to the ABC transporter superfamily. ABCD family. Peroxisomal fatty acyl CoA transporter (TC 3.A.1.203) subfamily. As to quaternary structure, homodimer or heterodimer. Interacts with LMBRD1; this interaction induces the translocation of ABCD4 from the ER to the lysosome membrane. Interacts with LMBRD1 and MMACHC; this interaction ensures the transport of cobalamin from the lysosome to the cytosol.

It is found in the endoplasmic reticulum membrane. Its subcellular location is the lysosome membrane. It catalyses the reaction an R-cob(III)alamin(out) + ATP + H2O = an R-cob(III)alamin(in) + ADP + phosphate + H(+). Its function is as follows. Lysosomal membrane protein that transports cobalamin (Vitamin B12) from the lysosomal lumen to the cytosol in an ATP-dependent manner. Targeted by LMBRD1 lysosomal chaperone from the endoplasmic reticulum to the lysosomal membrane. Then forms a complex with lysosomal chaperone LMBRD1 and cytosolic MMACHC to transport cobalamin across the lysosomal membrane. The chain is Lysosomal cobalamin transporter ABCD4 from Mus musculus (Mouse).